A 362-amino-acid polypeptide reads, in one-letter code: G-prodeshotein coupled receptor 4 (362 aa).

The Extracellular segment spans residues 1-8 (MGNHTWEG). Residue N3 is glycosylated (N-linked (GlcNAc...) asparagine). A helical membrane pass occupies residues 9 to 45 (CHVDSRVDHLFPPSLYIFVIGVGLPTNCLALWAAYRQ). Intrachain disulfides connect C9–C258 and C90–C168. The Cytoplasmic segment spans residues 46–49 (VQQR). Residues 50 to 80 (NELGVYLMNLSIADLLYICTLPLWVDYFLHH) traverse the membrane as a helical segment. Over 81–85 (DNWIH) the chain is Extracellular. The chain crosses the membrane as a helical span at residues 86 to 121 (GPGSCKLFGFIFYTNIYISIAFLCCISVDRYLAVAH). Residues 122–129 (PLRFARLR) are Cytoplasmic-facing. The helical transmembrane segment at 130–156 (RVKTAVAVSSVVWATELGANSAPLFHD) threads the bilayer. Residues 157 to 172 (ELFRDRYNHTFCFEKF) are Extracellular-facing. The interval 157-172 (ELFRDRYNHTFCFEKF) is extracellular loop 2 (ECL2). N164 carries an N-linked (GlcNAc...) asparagine glycan. Residues 173–210 (PMEGWVAWMNLYRVFVGFLFPWALMLLSYRGILRAVRG) form a helical membrane-spanning segment. Over 211 to 214 (SVST) the chain is Cytoplasmic. Residues 215 to 250 (ERQEKAKIKRLALSLIAIVLVCFAPYHVLLLSRSAI) form a helical membrane-spanning segment. The Extracellular portion of the chain corresponds to 251-260 (YLGRPWDCGF). The chain crosses the membrane as a helical span at residues 261–289 (EERVFSAYHSSLAFTSLNCVADPILYCLV). Topologically, residues 290-362 (NEGARSDVAK…VQLKMLPPAQ (73 aa)) are cytoplasmic. The segment at 335–362 (AKAMTGSWAATPPSQGDQVQLKMLPPAQ) is disordered.

The protein belongs to the G-protein coupled receptor 1 family.

It is found in the cell membrane. Activated by a network of residues that connects an extracellular-facing cavity to Glu-145, a conserved charged residue buried in the transmembrane core of the receptor. Protonation likely drives conformational changes in extracellular loop 2 (ECL2), which stabilizes movement of transmembrane 3 (TM3) and a series of rearrangements that connect the extracellular-facing cavity to Glu-145, a residue only conserved in proton-sensing G-protein coupled receptors. In terms of biological role, proton-sensing G-protein coupled receptor activated by extracellular pH, which is required to monitor pH changes and generate adaptive reactions. Activated by an optimal pH of 6.8-7.2. Ligand binding causes a conformation change that triggers signaling via guanine nucleotide-binding proteins (G proteins) and modulates the activity of downstream effectors, such as adenylate cyclase. GPR4 is mainly coupled to G(s) G proteins and mediates activation of adenylate cyclase activity. May also couple with G(q) and G(12)/G(13) G proteins. Acts as a key regulator of respiratory sensitivity to CO2/H(+) in brain retrotrapezoid nucleus neurons: acts by mediating detection of protons generated by the formation of carbonic acid in the blood, an important mechanism to impulse to breathe. Also acts as a regulator of acid secretion in the kidney collecting duct by maintaining acid-base homeostasis in the kidney. Acidosis-induced GPR4 activation increases paracellular gap formation and permeability of vascular endothelial cells, possibly through the G(12)/G(13)/Rho GTPase signaling pathway. This chain is G-prodeshotein coupled receptor 4, found in Homo sapiens (Human).